Consider the following 201-residue polypeptide: Cardiotrophin-1 (201 aa).

The protein belongs to the IL-6 superfamily. As to expression, highly expressed in heart, skeletal muscle, prostate and ovary. Lower levels in lung, kidney, pancreas, thymus, testis and small intestine. Little or no expression in brain, placenta, liver, spleen, colon or peripheral blood leukocytes.

It is found in the secreted. Its function is as follows. Induces cardiac myocyte hypertrophy in vitro. Binds to and activates the ILST/gp130 receptor. The sequence is that of Cardiotrophin-1 (CTF1) from Homo sapiens (Human).